Consider the following 333-residue polypeptide: Complement C1q and tumor necrosis factor-related protein 9A (333 aa).

Positions 1–19 are cleaved as a signal peptide; the sequence is MRIWWLLLAIEICTGNINS. Collagen-like domains follow at residues 24–82, 95–154, and 155–191; these read RQGH…DGKV, GSPG…PGPM, and GPIG…GEKG. The segment at 24–188 is disordered; it reads RQGHPGIPGN…GIRGWKGDRG (165 aa). Residues 26-40 are compositionally biased toward low complexity; sequence GHPGIPGNPGHNGLP. Proline 31, proline 34, and proline 40 each carry 4-hydroxyproline. Residues 42–57 show a composition bias toward basic and acidic residues; that stretch reads RDGRDGAKGDKGDAGE. 4-hydroxyproline occurs at positions 58, 61, and 64. The segment covering 69-88 has biased composition (basic and acidic residues); that stretch reads TSGEKGERGADGKVEAKGIK. 5-hydroxylysine is present on residues lysine 73 and lysine 127. O-linked (Gal...) hydroxylysine glycosylation is found at lysine 73 and lysine 127. 3 positions are modified to 4-hydroxyproline: proline 151, proline 160, and proline 175. The region spanning 197–333 is the C1q domain; that stretch reads LVLPKSAFTV…FTGFLLFSSP (137 aa).

As to quaternary structure, multimers (predominantly trimers). Interacts with ADIPOQ via the C1q domain to form a heterotrimeric complex. Interacts with CTRP9B. Forms heterotrimers and heterooligomeric complexes with CTRP9B. As to expression, expressed predominantly in adipose tissue.

It is found in the secreted. Probable adipokine. Activates AMPK, AKT, and p44/42 MAPK signaling pathways. The sequence is that of Complement C1q and tumor necrosis factor-related protein 9A (C1QTNF9) from Homo sapiens (Human).